Here is a 199-residue protein sequence, read N- to C-terminus: MAFLFISNEWKYQQLIFKINCWHFCYYPKNYLGGSILSKRLFIPPSACRIDLSVFPWAFICSPWNFCSTWSSLICSPCFSTVWVSLLICSPWRSTTWTNWLICSPCFSTVWVNLLICSPWAAKVVSIFVSRWLFEFLYSLNSLRVTYSVFTGITGLLSLNCLLNLPENSTLLFSGLMMYQPEKVPFLVFFTMSWNSFSL.

The next 4 helical transmembrane spans lie at 41–61, 72–92, 109–129, and 145–165; these read LFIP…AFIC, SLIC…CSPW, TVWV…SIFV, and VTYS…LLNL.

To M.pneumoniae MPN_037.

The protein resides in the cell membrane. This is an uncharacterized protein from Mycoplasma pneumoniae (strain ATCC 29342 / M129 / Subtype 1) (Mycoplasmoides pneumoniae).